Consider the following 210-residue polypeptide: Neurotrophin-4 (210 aa).

The signal sequence occupies residues Met1–Ser24. Residues Gln25–Arg80 constitute a propeptide that is removed on maturation. N-linked (GlcNAc...) asparagine glycosylation is present at Asn76. Intrachain disulfides connect Cys97/Cys170, Cys141/Cys199, and Cys158/Cys201.

The protein belongs to the NGF-beta family. In terms of tissue distribution, highest levels in prostate, lower levels in thymus, placenta, and skeletal muscle. Expressed in embryonic and adult tissues.

The protein resides in the secreted. In terms of biological role, target-derived survival factor for peripheral sensory sympathetic neurons. May promote ameloblast differentiation and subsequent reduction in proliferation of ameloblasts. The protein is Neurotrophin-4 (NTF4) of Homo sapiens (Human).